The primary structure comprises 56 residues: Large ribosomal subunit protein bL32 (56 aa).

The disordered stretch occupies residues 1 to 35; it reads MAVQQNKPTRSKRGMRRSHDALTATHVSVDKTSGE.

This sequence belongs to the bacterial ribosomal protein bL32 family.

This is Large ribosomal subunit protein bL32 from Proteus mirabilis (strain HI4320).